We begin with the raw amino-acid sequence, 178 residues long: MSRVGKKIIDIPSDVTVTFDGSHVTVKGPKGELERTLNERMTFKQEENTVEVVRPSDSKEDRTDHGTTRALLNNMVLGVSQGYEKTLELVGVGYRAQMQGKDLVLNVGYSHPVEIKAEEGITFAVEKNTTVKVSGVSKEQVGAIASNIRSVRPPEPYKGKGIRYQGEYVRRKEGKTGK.

The protein belongs to the universal ribosomal protein uL6 family. As to quaternary structure, part of the 50S ribosomal subunit.

In terms of biological role, this protein binds to the 23S rRNA, and is important in its secondary structure. It is located near the subunit interface in the base of the L7/L12 stalk, and near the tRNA binding site of the peptidyltransferase center. This is Large ribosomal subunit protein uL6 from Staphylococcus epidermidis (strain ATCC 35984 / DSM 28319 / BCRC 17069 / CCUG 31568 / BM 3577 / RP62A).